Consider the following 98-residue polypeptide: NADH-ubiquinone oxidoreductase chain 4L (98 aa).

The next 3 membrane-spanning stretches (helical) occupy residues 1–21 (MMSI…GVLI), 28–48 (STLL…ALII), and 59–79 (APLI…ALLV).

It belongs to the complex I subunit 4L family. As to quaternary structure, core subunit of respiratory chain NADH dehydrogenase (Complex I) which is composed of 45 different subunits.

It is found in the mitochondrion inner membrane. It carries out the reaction a ubiquinone + NADH + 5 H(+)(in) = a ubiquinol + NAD(+) + 4 H(+)(out). In terms of biological role, core subunit of the mitochondrial membrane respiratory chain NADH dehydrogenase (Complex I) which catalyzes electron transfer from NADH through the respiratory chain, using ubiquinone as an electron acceptor. Part of the enzyme membrane arm which is embedded in the lipid bilayer and involved in proton translocation. The chain is NADH-ubiquinone oxidoreductase chain 4L (MT-ND4L) from Lagostrophus fasciatus (Banded hare-wallaby).